The following is a 370-amino-acid chain: Maturase K (370 aa).

The protein belongs to the intron maturase 2 family. MatK subfamily.

It is found in the plastid. Its subcellular location is the chloroplast. Its function is as follows. Usually encoded in the trnK tRNA gene intron. Probably assists in splicing its own and other chloroplast group II introns. The sequence is that of Maturase K from Marchantia polymorpha (Common liverwort).